Consider the following 456-residue polypeptide: Protein trichome birefringence-like 25 (456 aa).

Residues 26 to 42 (QIFLKSVAFFLLIGLAY) traverse the membrane as a helical; Signal-anchor for type II membrane protein segment. The GDS motif signature appears at 172-174 (GDS). Positions 426-440 (DCLHWCLPGPIDSWN) match the DCXHWCLPGXXDXWN motif motif.

The protein belongs to the PC-esterase family. TBL subfamily.

The protein localises to the membrane. In terms of biological role, may be involved in the O-acetylation of mannan. May act as a bridging protein that binds pectin and other cell wall polysaccharides. Probably involved in maintaining esterification of pectins. This Arabidopsis thaliana (Mouse-ear cress) protein is Protein trichome birefringence-like 25 (TBL25).